A 155-amino-acid polypeptide reads, in one-letter code: NADPH-dependent 7-cyano-7-deazaguanine reductase (155 aa).

Cysteine 53 functions as the Thioimide intermediate in the catalytic mechanism. Aspartate 60 functions as the Proton donor in the catalytic mechanism. Substrate-binding positions include 75-77 and 94-95; these read VES and HE.

This sequence belongs to the GTP cyclohydrolase I family. QueF type 1 subfamily.

The protein resides in the cytoplasm. It catalyses the reaction 7-aminomethyl-7-carbaguanine + 2 NADP(+) = 7-cyano-7-deazaguanine + 2 NADPH + 3 H(+). It participates in tRNA modification; tRNA-queuosine biosynthesis. Functionally, catalyzes the NADPH-dependent reduction of 7-cyano-7-deazaguanine (preQ0) to 7-aminomethyl-7-deazaguanine (preQ1). The polypeptide is NADPH-dependent 7-cyano-7-deazaguanine reductase (Hyphomonas neptunium (strain ATCC 15444)).